The chain runs to 81 residues: Small cysteine-rich protein 6 (81 aa).

The N-terminal stretch at 1–23 (MDTKVACLLLIILGALTVQGAVS) is a signal peptide. Positions 24–25 (GN) are excised as a propeptide.

Belongs to the Cnidaria small cysteine-rich protein (SCRiP) family. beta subfamily. In terms of processing, contains 4 disulfide bonds.

It localises to the secreted. It is found in the nematocyst. Its function is as follows. Induces neurotoxic symptoms on zebrafish. Has also been claimed to be implied in calcification, but tests on homolog proteins suggest that proteins of this family have a neurotoxic function and not a calcification function. In Orbicella faveolata (Mountainous star coral), this protein is Small cysteine-rich protein 6.